Consider the following 474-residue polypeptide: Microtubule protein alp7 (474 aa).

Residues 1-20 (MSDIVSSSTDYSRRSPSSSS) show a composition bias toward low complexity. Disordered regions lie at residues 1 to 79 (MSDI…DTLN), 93 to 114 (KSFD…LSQH), and 164 to 223 (SLQT…NSTQ). Ser-17 is modified (phosphoserine). Residues 25 to 36 (ETDHTGFHEKRQ) are compositionally biased toward basic and acidic residues. Positions 66–76 (SKPNPQLNLKD) are enriched in polar residues. Polar residues-rich tracts occupy residues 177 to 189 (SNGS…NTAP) and 201 to 223 (RNSA…NSTQ). Coiled-coil stretches lie at residues 219-273 (INST…QLRS) and 367-471 (KISN…LNLE).

Interacts with alp14.

It is found in the nucleus. The protein localises to the cytoplasm. The protein resides in the cytoskeleton. It localises to the spindle. Its subcellular location is the chromosome. It is found in the centromere. The protein localises to the kinetochore. Required for bipolar spindle formation and proper chromosome segregation. Has an indirect role in connecting the kinetochores and the plus end of pole to chromosome microtubules by targeting alp14 to the spindle pole body. Involved in the emergence of large microtubule organizing centers (MTOC) in interphase cells. Attaches to the minus ends of microtubules and associates with the sites of microtubule attachment on the nuclear envelope. This leads to the stabilization of the microtubule bundles. This is Microtubule protein alp7 (alp7) from Schizosaccharomyces pombe (strain 972 / ATCC 24843) (Fission yeast).